The chain runs to 400 residues: Probable peptidoglycan glycosyltransferase FtsW (400 aa).

At Met-1–Gln-29 the chain is on the cytoplasmic side. A helical membrane pass occupies residues Leu-30–Phe-50. Over Pro-51 to Pro-60 the chain is Periplasmic. A helical membrane pass occupies residues Phe-61–Val-81. The Cytoplasmic segment spans residues Leu-82–His-95. A helical transmembrane segment spans residues Leu-96–Gly-116. Topologically, residues Ala-117–Pro-122 are periplasmic. Residues Leu-123–Ala-143 form a helical membrane-spanning segment. Topologically, residues Gly-144–Asp-155 are cytoplasmic. A helical transmembrane segment spans residues Ser-156–Met-176. Over Gln-177–Pro-178 the chain is Periplasmic. A helical membrane pass occupies residues Asp-179–Ala-199. Residue Lys-200 is a topological domain, cytoplasmic. Residues Leu-201–Ala-221 form a helical membrane-spanning segment. The Periplasmic segment spans residues Glu-222 to Gly-290. A helical membrane pass occupies residues Phe-291–Ile-311. Over Gly-312–Arg-321 the chain is Cytoplasmic. The helical transmembrane segment at Phe-322 to Val-342 threads the bilayer. At Gly-343–Leu-356 the chain is on the periplasmic side. Residues Pro-357–Ile-377 form a helical membrane-spanning segment. The Cytoplasmic segment spans residues Arg-378–Lys-400.

Belongs to the SEDS family. FtsW subfamily.

It localises to the cell inner membrane. It carries out the reaction [GlcNAc-(1-&gt;4)-Mur2Ac(oyl-L-Ala-gamma-D-Glu-L-Lys-D-Ala-D-Ala)](n)-di-trans,octa-cis-undecaprenyl diphosphate + beta-D-GlcNAc-(1-&gt;4)-Mur2Ac(oyl-L-Ala-gamma-D-Glu-L-Lys-D-Ala-D-Ala)-di-trans,octa-cis-undecaprenyl diphosphate = [GlcNAc-(1-&gt;4)-Mur2Ac(oyl-L-Ala-gamma-D-Glu-L-Lys-D-Ala-D-Ala)](n+1)-di-trans,octa-cis-undecaprenyl diphosphate + di-trans,octa-cis-undecaprenyl diphosphate + H(+). Its pathway is cell wall biogenesis; peptidoglycan biosynthesis. Peptidoglycan polymerase that is essential for cell division. The polypeptide is Probable peptidoglycan glycosyltransferase FtsW (Aliivibrio salmonicida (strain LFI1238) (Vibrio salmonicida (strain LFI1238))).